A 162-amino-acid polypeptide reads, in one-letter code: Protein S40-4 (162 aa).

Belongs to the senescence regulator S40 family.

It is found in the cytoplasm. The polypeptide is Protein S40-4 (Arabidopsis thaliana (Mouse-ear cress)).